The chain runs to 218 residues: Outer-membrane lipoprotein LolB (218 aa).

Residues 1 to 20 (MSQVIRTLALTGLALAGLSG) form the signal peptide. Cys21 carries N-palmitoyl cysteine lipidation. A lipid anchor (S-diacylglycerol cysteine) is attached at Cys21.

Belongs to the LolB family. In terms of assembly, monomer.

The protein resides in the cell outer membrane. Functionally, plays a critical role in the incorporation of lipoproteins in the outer membrane after they are released by the LolA protein. The polypeptide is Outer-membrane lipoprotein LolB (Xanthomonas campestris pv. campestris (strain 8004)).